Here is a 620-residue protein sequence, read N- to C-terminus: 1-deoxy-D-xylulose-5-phosphate synthase (620 aa).

Residues His-80 and 121–123 each bind thiamine diphosphate; that span reads GHS. Asp-152 serves as a coordination point for Mg(2+). Thiamine diphosphate contacts are provided by residues 153-154, Asn-181, Tyr-288, and Glu-370; that span reads GA. Position 181 (Asn-181) interacts with Mg(2+).

It belongs to the transketolase family. DXPS subfamily. As to quaternary structure, homodimer. The cofactor is Mg(2+). Thiamine diphosphate serves as cofactor.

It carries out the reaction D-glyceraldehyde 3-phosphate + pyruvate + H(+) = 1-deoxy-D-xylulose 5-phosphate + CO2. It functions in the pathway metabolic intermediate biosynthesis; 1-deoxy-D-xylulose 5-phosphate biosynthesis; 1-deoxy-D-xylulose 5-phosphate from D-glyceraldehyde 3-phosphate and pyruvate: step 1/1. Functionally, catalyzes the acyloin condensation reaction between C atoms 2 and 3 of pyruvate and glyceraldehyde 3-phosphate to yield 1-deoxy-D-xylulose-5-phosphate (DXP). This chain is 1-deoxy-D-xylulose-5-phosphate synthase, found in Photobacterium profundum (strain SS9).